A 225-amino-acid polypeptide reads, in one-letter code: MNLIEFPLLDQTSSNSVISTTPNDLSNWSRLSSLWPLLYGTSCCFIEFASLIGSRFDFDRYGLVPRSSPRQADLILTAGTVTMKMAPSLVRLYEQMPEPKYVIAMGACTITGGMFSTDSYSTVRGVDKLIPVDVYLPGCPPKPEAVIDALTKLRKKISREIVEDRTRSQNKNRCFTTSHKLYVRRSTHTGTYEQELLYQSPSTLDISSETFFKSKSPVPSYKLVN.

4 residues coordinate [4Fe-4S] cluster: C43, C44, C108, and C139.

It belongs to the complex I 20 kDa subunit family. In terms of assembly, NDH is composed of at least 16 different subunits, 5 of which are encoded in the nucleus. Requires [4Fe-4S] cluster as cofactor.

It is found in the plastid. The protein resides in the chloroplast thylakoid membrane. The catalysed reaction is a plastoquinone + NADH + (n+1) H(+)(in) = a plastoquinol + NAD(+) + n H(+)(out). The enzyme catalyses a plastoquinone + NADPH + (n+1) H(+)(in) = a plastoquinol + NADP(+) + n H(+)(out). Functionally, NDH shuttles electrons from NAD(P)H:plastoquinone, via FMN and iron-sulfur (Fe-S) centers, to quinones in the photosynthetic chain and possibly in a chloroplast respiratory chain. The immediate electron acceptor for the enzyme in this species is believed to be plastoquinone. Couples the redox reaction to proton translocation, and thus conserves the redox energy in a proton gradient. This chain is NAD(P)H-quinone oxidoreductase subunit K, chloroplastic, found in Agrostis stolonifera (Creeping bentgrass).